The chain runs to 1213 residues: MRSRNQGGESASDGHISCPKPSIIGNAGEKSLSEDAKKKKKSNRKEDDVMASGTVKRHLKTSGECERKTKKSLELSKEDLIQLLSIMEGELQAREDVIHMLKTEKTKPEVLEAHYGSAEPEKVLRVLHRDAILAQEKSIGEDVYEKPISELDRLEEKQKETYRRMLEQLLLAEKCHRRTVYELENEKHKHTDYMNKSDDFTNLLEQERERLKKLLEQEKAYQARKEKENAKRLNKLRDELVKLKSFALMLVDERQMHIEQLGLQSQKVQDLTQKLREEEEKLKAITSKSKEDRQKLLKLEVDFEHKASRFSQEHEEMNAKLANQESHNRQLRLKLVGLTQRIEELEETNKNLQKAEEELQELRDKIAKGECGNSSLMAEVENLRKRVLEMEGKDEEITKTESQCRELRKKLQEEEHHSKELRLEVEKLQKRMSELEKLEEAFSKSKSECTQLHLNLEKEKNLTKDLLNELEVVKSRVKELECSESRLEKAELSLKDDLTKLKSFTVMLVDERKNMMEKIKQEERKVDGLNKNFKVEQGKVMDVTEKLIEESKKLLKLKSEMEEKVYNLTRERDELIGKLKSEEEKSSELSCSVDLLKKRLDGIEEVEREITRGRSRKGSELTCPEDNKIKELTLEIERLKKRLQQLEVVEGDLMKTEDEYDQLEQKFRTEQDKANFLSQQLEEIKHQIAKNKAIEKGEVVSQEAELRHRFRLEEAKSRDLKAEVQALKEKIHELMNKEDQLSQLQVDYSVLQQRFMEEENKNKNMGQEVLNLTKELELSKRYSRALRPSVNGRRMVDVPVTSTGVQTDAVSGEAAEEETPAVFIRKSFQEENHIMSNLRQVGLKKPVERSSVLDRYPPAANELTMRKSWIPWMRKRENGPSITQEKGPRTNSSPGHPGEVVLSPKQGQPLHIRVTPDHENSTATLEITSPTSEEFFSSTTVIPTLGNQKPRITIIPSPNVMPQKQKSGDTTLGPERAMSPVTITTFSREKTPESGRGAFADRPTSPIQIMTVSTSAAPAEIAVSPESQEMPMGRTILKVTPEKQTVPTPVRKYNSNANIITTEDNKIHIHLGSQFKRSPGTSGEGVSPVITVRPVNVTAEKEVSTGTVLRSPRNHLSSRPGASKVTSTITITPVTTSSARGTQSVSGQDGSSQRPTPTRIPMSKGMKAGKPVVAAPGAGNLTKFEPRAETQSMKIELKKSAASSTTSLGGGKG.

A disordered region spans residues 1 to 70 (MRSRNQGGES…TSGECERKTK (70 aa)). Positions 61–70 (TSGECERKTK) are enriched in basic and acidic residues. Ser-138 carries the phosphoserine modification. 2 coiled-coil regions span residues 192-591 (DYMN…ELSC) and 624-781 (PEDN…LSKR). Disordered regions lie at residues 878-900 (NGPS…PGEV) and 949-976 (KPRI…GPER). Polar residues-rich tracts occupy residues 880-894 (PSIT…NSSP) and 960-970 (VMPQKQKSGDT). Ser-979 is subject to Phosphoserine. The interval 1103 to 1213 (VSTGTVLRSP…STTSLGGGKG (111 aa)) is disordered. A compositionally biased stretch (low complexity) spans 1125–1138 (VTSTITITPVTTSS). Positions 1139–1156 (ARGTQSVSGQDGSSQRPT) are enriched in polar residues. Residues 1168–1179 (AGKPVVAAPGAG) show a composition bias toward low complexity.

The protein belongs to the FILIP1 family. Interacts with FLNA. Interacts with RHOD (in GTP-bound form). Moderately expressed in adult heart and brain. Weakly expressed in lung, skeletal muscle, ovary, testis, kidney, and fetal brain, and hardly detectable in liver, pancreas, spleen, and fetal liver. Within brain, moderate expression is found in amygdala and caudate nucleus. Expressed in skin fibroblasts.

It is found in the cytoplasm. The protein resides in the cytoskeleton. By acting through a filamin-A/F-actin axis, it controls the start of neocortical cell migration from the ventricular zone. May be able to induce the degradation of filamin-A. This chain is Filamin-A-interacting protein 1 (FILIP1), found in Homo sapiens (Human).